The sequence spans 584 residues: Beta-fructofuranosidase, insoluble isoenzyme CWINV1 (584 aa).

The signal sequence occupies residues 1-28 (MTKEVCSNIGLWLLLTLLIGNYVVNLEA). Residues 63–66 (WMND), Gln-82, Trp-90, and 125–126 (WS) each bind substrate. Asp-66 is an active-site residue. N-linked (GlcNAc...) asparagine glycosylation is found at Asn-159 and Asn-186. Substrate-binding positions include 191-192 (RD), Glu-246, and Asp-282. N-linked (GlcNAc...) asparagine glycosylation is found at Asn-342 and Asn-446. Cys-442 and Cys-491 are disulfide-bonded.

This sequence belongs to the glycosyl hydrolase 32 family. In terms of tissue distribution, expressed in seedlings, leaves, flowers, and seeds.

It is found in the secreted. It localises to the extracellular space. Its subcellular location is the apoplast. The protein localises to the cell wall. It carries out the reaction Hydrolysis of terminal non-reducing beta-D-fructofuranoside residues in beta-D-fructofuranosides.. Its function is as follows. Beta-fructofuranosidase that can use sucrose and 1-kestose, and, to a lower extent, neokestose and levan, as substrates, but not inuline. The polypeptide is Beta-fructofuranosidase, insoluble isoenzyme CWINV1 (CWINV1) (Arabidopsis thaliana (Mouse-ear cress)).